Consider the following 512-residue polypeptide: Serine palmitoyltransferase 3 (512 aa).

Lysine 345 is subject to N6-(pyridoxal phosphate)lysine.

Belongs to the class-II pyridoxal-phosphate-dependent aminotransferase family. Heterodimer of sptl-1/sptl-3. Pyridoxal 5'-phosphate serves as cofactor.

It catalyses the reaction L-serine + hexadecanoyl-CoA + H(+) = 3-oxosphinganine + CO2 + CoA. The protein operates within lipid metabolism; sphingolipid metabolism. Functionally, component of the serine palmitoyltransferase (SPT) that catalyzes the first committed step in sphingolipid biosynthesis, which is the condensation of an acyl-CoA species and L-serine. The catalytic core is composed of a heterodimer of sptl-1 and sptl-2 or sptl-1 and sptl-3. Required for the specification of abicobasal polarity and development of the gut lumen. The sequence is that of Serine palmitoyltransferase 3 (sptl-3) from Caenorhabditis elegans.